A 249-amino-acid chain; its full sequence is Zinc finger protein mnm-2 (249 aa).

The segment at 20–65 is disordered; the sequence is PKEELETEEEDEEEDEEEELSSSEVTSENDMETESASSSASSVGQP. Residues 24 to 52 are compositionally biased toward acidic residues; it reads LETEEEDEEEDEEEELSSSEVTSENDMET. 3 C2H2-type zinc fingers span residues 168–190, 196–218, and 224–246; these read YRCD…KRIH, FKCE…RLTH, and YVCG…MRTH.

In larva and adult, expressed in the M3 pharyngeal motor neurons, extrapharyngeal neurons in the head, the PQR tail neurons, rectal cells, vulva cells, the spermetheca-uterine valve, body wall muscle cells and neurons of the ventral nerve cord. In the embryo, expressed in pharyngeal cells, extrapharyngeal head neurons and within the tail. Expressed in body wall muscle cells during late embryonic stages. Expressed in the mother cells of the M2 and M3 pharyngeal motor neurons precursor cells at the embryonic bean stage and subsequently in the M2 and M3 cells as they are born. Expression is sustained only in the two M3 cells up to at least the 5-day-old adult. In contrast, expression gradually declines in the M2 cells beginning from the time of their birth, and is completely undetectable by the time of hatching.

It is found in the nucleus. Required in the M3 pharyngeal motor neuron to guide the growth cone of the sister M2 motor neuron during axon development. This chain is Zinc finger protein mnm-2, found in Caenorhabditis elegans.